We begin with the raw amino-acid sequence, 110 residues long: UPF0122 protein SP70585_1353 (110 aa).

The protein belongs to the UPF0122 family.

Functionally, might take part in the signal recognition particle (SRP) pathway. This is inferred from the conservation of its genetic proximity to ftsY/ffh. May be a regulatory protein. In Streptococcus pneumoniae (strain 70585), this protein is UPF0122 protein SP70585_1353.